We begin with the raw amino-acid sequence, 249 residues long: Diaminopimelate epimerase (249 aa).

The substrate site is built by Asn11 and Asn60. The active-site Proton donor is the Cys69. Residues 70–71, Asn164, and 182–183 contribute to the substrate site; these read GN and ER. Cys192 (proton acceptor) is an active-site residue. Substrate is bound at residue 193 to 194; that stretch reads GT.

The protein belongs to the diaminopimelate epimerase family. Homodimer.

It localises to the cytoplasm. It catalyses the reaction (2S,6S)-2,6-diaminopimelate = meso-2,6-diaminopimelate. It participates in amino-acid biosynthesis; L-lysine biosynthesis via DAP pathway; DL-2,6-diaminopimelate from LL-2,6-diaminopimelate: step 1/1. Functionally, catalyzes the stereoinversion of LL-2,6-diaminopimelate (L,L-DAP) to meso-diaminopimelate (meso-DAP), a precursor of L-lysine and an essential component of the bacterial peptidoglycan. The chain is Diaminopimelate epimerase from Campylobacter jejuni subsp. jejuni serotype O:6 (strain 81116 / NCTC 11828).